A 347-amino-acid polypeptide reads, in one-letter code: N-acetyl-gamma-glutamyl-phosphate reductase (347 aa).

The active site involves C151.

Belongs to the NAGSA dehydrogenase family. Type 1 subfamily.

It is found in the cytoplasm. It carries out the reaction N-acetyl-L-glutamate 5-semialdehyde + phosphate + NADP(+) = N-acetyl-L-glutamyl 5-phosphate + NADPH + H(+). The protein operates within amino-acid biosynthesis; L-arginine biosynthesis; N(2)-acetyl-L-ornithine from L-glutamate: step 3/4. Catalyzes the NADPH-dependent reduction of N-acetyl-5-glutamyl phosphate to yield N-acetyl-L-glutamate 5-semialdehyde. This Corynebacterium glutamicum (strain R) protein is N-acetyl-gamma-glutamyl-phosphate reductase.